The primary structure comprises 839 residues: DNA gyrase subunit A (839 aa).

Residues 46-510 enclose the Topo IIA-type catalytic domain; it reads LPDARDGLKP…ISEDIDDEDL (465 aa). The active-site O-(5'-phospho-DNA)-tyrosine intermediate is Tyr134. The GyrA-box signature appears at 537 to 543; the sequence is QHRGGVG.

It belongs to the type II topoisomerase GyrA/ParC subunit family. In terms of assembly, heterotetramer, composed of two GyrA and two GyrB chains. In the heterotetramer, GyrA contains the active site tyrosine that forms a transient covalent intermediate with DNA, while GyrB binds cofactors and catalyzes ATP hydrolysis.

The protein localises to the cytoplasm. It carries out the reaction ATP-dependent breakage, passage and rejoining of double-stranded DNA.. In terms of biological role, a type II topoisomerase that negatively supercoils closed circular double-stranded (ds) DNA in an ATP-dependent manner to modulate DNA topology and maintain chromosomes in an underwound state. Negative supercoiling favors strand separation, and DNA replication, transcription, recombination and repair, all of which involve strand separation. Also able to catalyze the interconversion of other topological isomers of dsDNA rings, including catenanes and knotted rings. Type II topoisomerases break and join 2 DNA strands simultaneously in an ATP-dependent manner. The sequence is that of DNA gyrase subunit A from Mycoplasma pneumoniae (strain ATCC 29342 / M129 / Subtype 1) (Mycoplasmoides pneumoniae).